Consider the following 500-residue polypeptide: L-2-amino-4-chloropent-4-enoate dechlorinase/desaturase (500 aa).

Lysine 311 bears the N6-(pyridoxal phosphate)lysine mark.

Belongs to the trans-sulfuration enzymes family. The cofactor is pyridoxal 5'-phosphate.

It carries out the reaction L-2-amino-4-chloropent-4-enoate = L-propargylglycine + chloride + H(+). Its pathway is amino-acid metabolism. It functions in the pathway antibiotic biosynthesis. Involved in the biosynthesis of terminal alkyne-containing amino acids such as L-propargylglycine (Pra) and L-beta-ethynylserine, that are produced as antibiotics by S.cattleya. Catalyzes gamma-elimination of chloride from 4-chloro-allyl-L-glycine (also named L-2-amino-4-chloropent-4-enoate), followed by an isomerization, to form the terminal-alkyne product L-propargylglycine. This Streptantibioticus cattleyicolor (strain ATCC 35852 / DSM 46488 / JCM 4925 / NBRC 14057 / NRRL 8057) (Streptomyces cattleya) protein is L-2-amino-4-chloropent-4-enoate dechlorinase/desaturase.